Reading from the N-terminus, the 86-residue chain is Mu-theraphotoxin-Hhn1d (86 aa).

The N-terminal stretch at Met-1–Ala-21 is a signal peptide. A propeptide spanning residues Ser-22–Arg-49 is cleaved from the precursor. Cystine bridges form between Cys-51–Cys-66, Cys-58–Cys-73, and Cys-65–Cys-80. The residue at position 84 (Ile-84) is an Isoleucine amide.

It belongs to the neurotoxin 10 (Hwtx-1) family. 22 (Htx-4) subfamily. In terms of assembly, monomer. In terms of tissue distribution, expressed by the venom gland.

The protein localises to the secreted. Its function is as follows. Neurotoxin. Selectively blocks neuronal tetrodotoxin-sensitive voltage-gated sodium channels (Nav). Does not affect tetrodotoxin-resistant voltage-gated sodium channels or calcium channels. This is Mu-theraphotoxin-Hhn1d from Cyriopagopus hainanus (Chinese bird spider).